The chain runs to 199 residues: Putative HMP/thiamine permease protein YkoE (199 aa).

6 helical membrane passes run 9–29, 40–60, 63–83, 85–105, 114–134, and 143–163; these read IVIM…FTHF, IAYE…AYMI, PGAA…LGNP, GPMV…VFLA, PVLM…DLFV, and GYLL…AGLL.

The complex is composed of two ATP-binding proteins (YkoD), two transmembrane proteins (YkoC and YkoE) and a solute-binding protein (YkoF).

The protein resides in the cell membrane. Part of the ABC transporter complex YkoCDEF that could transport hydroxymethylpyrimidine (HMP) and/or thiamine. Could also transport other HMP-containing products. Probably responsible for the translocation of the substrate across the membrane. The polypeptide is Putative HMP/thiamine permease protein YkoE (ykoE) (Bacillus subtilis (strain 168)).